A 509-amino-acid polypeptide reads, in one-letter code: L-aspartate oxidase (509 aa).

FAD-binding positions include 14–17 (SGIA), 45–52 (STDWAQGG), and Asp214. Arg279 serves as the catalytic Proton donor/acceptor. FAD is bound by residues Glu358 and 374–375 (SL). Disordered stretches follow at residues 389-412 (AAGD…PDLP) and 486-509 (NPES…DAGH). Over residues 402 to 412 (PELRDRDPDLP) the composition is skewed to basic and acidic residues. A compositionally biased stretch (acidic residues) spans 499–509 (AAAEEAPDAGH).

Belongs to the FAD-dependent oxidoreductase 2 family. NadB subfamily. FAD is required as a cofactor.

It is found in the cytoplasm. The catalysed reaction is L-aspartate + O2 = iminosuccinate + H2O2. Its pathway is cofactor biosynthesis; NAD(+) biosynthesis; iminoaspartate from L-aspartate (oxidase route): step 1/1. Its function is as follows. Catalyzes the oxidation of L-aspartate to iminoaspartate, the first step in the de novo biosynthesis of NAD(+). The polypeptide is L-aspartate oxidase (nadB) (Halobacterium salinarum (strain ATCC 700922 / JCM 11081 / NRC-1) (Halobacterium halobium)).